Reading from the N-terminus, the 153-residue chain is Aspartate carbamoyltransferase regulatory chain (153 aa).

Residues Cys109, Cys114, Cys135, and Cys138 each coordinate Zn(2+).

This sequence belongs to the PyrI family. In terms of assembly, contains catalytic and regulatory chains. The cofactor is Zn(2+).

In terms of biological role, involved in allosteric regulation of aspartate carbamoyltransferase. This Natronomonas pharaonis (strain ATCC 35678 / DSM 2160 / CIP 103997 / JCM 8858 / NBRC 14720 / NCIMB 2260 / Gabara) (Halobacterium pharaonis) protein is Aspartate carbamoyltransferase regulatory chain.